A 350-amino-acid polypeptide reads, in one-letter code: Cytosolic sulfotransferase 18 (350 aa).

M1 carries the N-acetylmethionine modification. Residues 1 to 17 (MESETLTAKATITTTTL) are compositionally biased toward low complexity. The segment at 1 to 28 (MESETLTAKATITTTTLPSHDETKTEST) is disordered. Residues 19 to 28 (SHDETKTEST) are compositionally biased toward basic and acidic residues. A 3'-phosphoadenylyl sulfate-binding site is contributed by 93–98 (KTGTTW). Catalysis depends on H155, which acts as the Proton acceptor. 3'-phosphoadenylyl sulfate-binding positions include R177, S185, Y243, and 313 to 315 (RKG).

Belongs to the sulfotransferase 1 family. In terms of tissue distribution, expressed in roots, leaves and stems. Barely detected in siliques and flowers.

Its subcellular location is the cytoplasm. The enzyme catalyses an aliphatic (Z)-desulfo-glucosinolate + 3'-phosphoadenylyl sulfate = a (Z)-omega-(methylsulfanyl)-N-sulfo-alkylhydroximate S-glucoside + adenosine 3',5'-bisphosphate + H(+). Inhibited by phosphoadenosine 5'-phosphate (PAP). Its function is as follows. Sulfotransferase that utilizes 3'-phospho-5'-adenylyl sulfate (PAPS) as sulfonate donor to catalyze the sulfate conjugation of desulfo-glucosinolates (dsGSs), the final step in the biosynthesis of the glucosinolate core structure. Preferred substrate are the long-chain desulfo-glucosinolates, 7-methylthioheptyl and 8-methylthiooctyl, derived from methionine. Substrate preference is desulfo-benzyl glucosinolate &gt; desulfo-4-methylthiobutyl glucosinolate &gt; desulfo-6-methylthiohexyl glucosinolate &gt; desulfo-3-methylthiopropyl glucosinolate &gt; desulfo-indol-3-yl methyl glucosinolate &gt; desulfo-singrin &gt; desulfo-3-butenyl glucosinolate. In Arabidopsis thaliana (Mouse-ear cress), this protein is Cytosolic sulfotransferase 18 (SOT18).